A 644-amino-acid chain; its full sequence is Core protein VP4 (644 aa).

This sequence belongs to the orbivirus VP4 family.

The protein resides in the virion. Its function is as follows. The VP4 protein is one of the five proteins (with VP1, VP3, VP6 and VP7) which form the inner capsid of the virus. In Bluetongue virus 2 (isolate USA) (BTV 2), this protein is Core protein VP4 (Segment-4).